Here is a 131-residue protein sequence, read N- to C-terminus: Small ribosomal subunit protein uS8 (131 aa).

Belongs to the universal ribosomal protein uS8 family. Part of the 30S ribosomal subunit. Contacts proteins S5 and S12.

Functionally, one of the primary rRNA binding proteins, it binds directly to 16S rRNA central domain where it helps coordinate assembly of the platform of the 30S subunit. This Porphyromonas gingivalis (strain ATCC 33277 / DSM 20709 / CIP 103683 / JCM 12257 / NCTC 11834 / 2561) protein is Small ribosomal subunit protein uS8.